A 511-amino-acid polypeptide reads, in one-letter code: MATLVQTGKAKQLTLLGFFAITASMVMAVYEYPTFATSGFSLVFFLLLGGILWFIPVGLCAAEMATVDGWEEGGVFAWVSNTLGPRWGFAAISFGYLQIAIGFIPMLYFVLGALSYILKWPALNEDPITKTIAALIILWALALTQFGGTKYTARIAKVGFFAGILLPAFILIALAAIYLHSGAPVAIEMDSKTFFPDFSKVGTLVVFVAFILSYMGVEASATHVNEMSNPGRDYPLAMLLLMVAAICLSSVGGLSIAMVIPGNEINLSAGVMQTFTVLMSHVAPEIEWTVRVISALLLLGVLAEIASWIVGPSRGMYVTAQKNLLPAAFAKMNKNGVPVTLVISQLVITSIALIILTNTGGGNNMSFLIALALTVVIYLCAYFMLFIGYIVLVLKHPDLKRTFNIPGGKGVKLVVAIVGLLTSIMAFIVSFLPPDNIQGDSTDMYVELLVVSFLVVLALPFILYAVHDRKGKANTGVTLEPINSQNAPKGHFFLHPRARSPHYIVMNDKKH.

The Cytoplasmic portion of the chain corresponds to 1 to 14 (MATLVQTGKAKQLT). Residues 15–35 (LLGFFAITASMVMAVYEYPTF) form a helical membrane-spanning segment. Residues 36–41 (ATSGFS) lie on the Periplasmic side of the membrane. Residues 42 to 62 (LVFFLLLGGILWFIPVGLCAA) traverse the membrane as a helical segment. Residues 63 to 93 (EMATVDGWEEGGVFAWVSNTLGPRWGFAAIS) are Cytoplasmic-facing. A helical membrane pass occupies residues 94–114 (FGYLQIAIGFIPMLYFVLGAL). Over 115–127 (SYILKWPALNEDP) the chain is Periplasmic. Residues 128–148 (ITKTIAALIILWALALTQFGG) form a helical membrane-spanning segment. At 149–157 (TKYTARIAK) the chain is on the cytoplasmic side. Residues 158–178 (VGFFAGILLPAFILIALAAIY) form a helical membrane-spanning segment. Residues 179-200 (LHSGAPVAIEMDSKTFFPDFSK) lie on the Periplasmic side of the membrane. The chain crosses the membrane as a helical span at residues 201–221 (VGTLVVFVAFILSYMGVEASA). At 222-239 (THVNEMSNPGRDYPLAML) the chain is on the cytoplasmic side. The helical transmembrane segment at 240 to 260 (LLMVAAICLSSVGGLSIAMVI) threads the bilayer. Residues 261-291 (PGNEINLSAGVMQTFTVLMSHVAPEIEWTVR) are Periplasmic-facing. The chain crosses the membrane as a helical span at residues 292 to 312 (VISALLLLGVLAEIASWIVGP). Over 313 to 335 (SRGMYVTAQKNLLPAAFAKMNKN) the chain is Cytoplasmic. Residues 336–356 (GVPVTLVISQLVITSIALIIL) form a helical membrane-spanning segment. The Periplasmic portion of the chain corresponds to 357 to 366 (TNTGGGNNMS). Residues 367–387 (FLIALALTVVIYLCAYFMLFI) form a helical membrane-spanning segment. The Cytoplasmic segment spans residues 388-412 (GYIVLVLKHPDLKRTFNIPGGKGVK). The chain crosses the membrane as a helical span at residues 413–433 (LVVAIVGLLTSIMAFIVSFLP). Over 434–445 (PDNIQGDSTDMY) the chain is Periplasmic. The chain crosses the membrane as a helical span at residues 446 to 466 (VELLVVSFLVVLALPFILYAV). The Cytoplasmic segment spans residues 467–511 (HDRKGKANTGVTLEPINSQNAPKGHFFLHPRARSPHYIVMNDKKH).

Belongs to the amino acid-polyamine-organocation (APC) superfamily. Glutamate:GABA antiporter (GGA) (TC 2.A.3.7) family.

It is found in the cell inner membrane. It carries out the reaction 4-aminobutanoate(in) + L-glutamate(out) = 4-aminobutanoate(out) + L-glutamate(in). Shows pH-dependent activity. The glutamate analog L-trans-pyrrolidine-2,4-dicarboxylic acid (L-PDC) blocks the uptake of glutamate by selective inhibition. Functionally, involved in glutaminase-dependent acid resistance. Exchanges extracellular glutamate (Glu) for intracellular gamma-aminobutyric acid (GABA) under acidic conditions. The ability to survive the extremely acidic conditions of the stomach is essential for successful colonization of the host by commensal and pathogenic bacteria. In Escherichia coli O157:H7, this protein is Glutamate/gamma-aminobutyrate antiporter (gadC).